We begin with the raw amino-acid sequence, 440 residues long: 3-phosphoshikimate 1-carboxyvinyltransferase (440 aa).

K25, S26, and R30 together coordinate 3-phosphoshikimate. Residue K25 participates in phosphoenolpyruvate binding. Residues G96 and R124 each coordinate phosphoenolpyruvate. Positions 168, 169, 310, and 337 each coordinate 3-phosphoshikimate. Q169 contacts phosphoenolpyruvate. D310 (proton acceptor) is an active-site residue. R341, R382, and K409 together coordinate phosphoenolpyruvate.

This sequence belongs to the EPSP synthase family. In terms of assembly, monomer.

The protein resides in the cytoplasm. It carries out the reaction 3-phosphoshikimate + phosphoenolpyruvate = 5-O-(1-carboxyvinyl)-3-phosphoshikimate + phosphate. Its pathway is metabolic intermediate biosynthesis; chorismate biosynthesis; chorismate from D-erythrose 4-phosphate and phosphoenolpyruvate: step 6/7. Catalyzes the transfer of the enolpyruvyl moiety of phosphoenolpyruvate (PEP) to the 5-hydroxyl of shikimate-3-phosphate (S3P) to produce enolpyruvyl shikimate-3-phosphate and inorganic phosphate. The polypeptide is 3-phosphoshikimate 1-carboxyvinyltransferase (Chlamydia trachomatis serovar A (strain ATCC VR-571B / DSM 19440 / HAR-13)).